Here is a 156-residue protein sequence, read N- to C-terminus: ATP synthase subunit b (156 aa).

Residues 7–27 (LFAQIIVFFGLVWFTMKFVWP) traverse the membrane as a helical segment.

It belongs to the ATPase B chain family. F-type ATPases have 2 components, F(1) - the catalytic core - and F(0) - the membrane proton channel. F(1) has five subunits: alpha(3), beta(3), gamma(1), delta(1), epsilon(1). F(0) has three main subunits: a(1), b(2) and c(10-14). The alpha and beta chains form an alternating ring which encloses part of the gamma chain. F(1) is attached to F(0) by a central stalk formed by the gamma and epsilon chains, while a peripheral stalk is formed by the delta and b chains.

The protein localises to the cell inner membrane. F(1)F(0) ATP synthase produces ATP from ADP in the presence of a proton or sodium gradient. F-type ATPases consist of two structural domains, F(1) containing the extramembraneous catalytic core and F(0) containing the membrane proton channel, linked together by a central stalk and a peripheral stalk. During catalysis, ATP synthesis in the catalytic domain of F(1) is coupled via a rotary mechanism of the central stalk subunits to proton translocation. Its function is as follows. Component of the F(0) channel, it forms part of the peripheral stalk, linking F(1) to F(0). This chain is ATP synthase subunit b, found in Neisseria gonorrhoeae (strain NCCP11945).